The following is an 857-amino-acid chain: Protein dalmatian (857 aa).

Disordered regions lie at residues 1-50 and 146-194; these read MVRT…KLSI and VQKS…FFHR. Polar residues-rich tracts occupy residues 146-156 and 165-176; these read VQKSTQPQNIK and SPCQQRIRSKSP. Residues Ser-173, Ser-175, Ser-184, and Ser-222 each carry the phosphoserine modification. Over residues 251-271 the composition is skewed to basic residues; that stretch reads GKPRAKRTAKKVRPVGNRRKV. Residues 251 to 281 are disordered; the sequence is GKPRAKRTAKKVRPVGNRRKVSTKDNEPEPV. Residue Ser-405 is modified to Phosphoserine. 2 disordered regions span residues 470-514 and 737-830; these read SICP…NAEN and PPRP…RDIE. Residues 771–781 are compositionally biased toward basic and acidic residues; the sequence is KQPRRTYVKER. The span at 797 to 806 shows a compositional bias: acidic residues; that stretch reads SESEDEDEQD. The segment covering 807-816 has biased composition (basic and acidic residues); the sequence is SHDKSLDSPE. A compositionally biased stretch (basic residues) spans 817–826; it reads KKRHHVKRPR.

The protein localises to the nucleus. The protein resides in the chromosome. Functionally, regulator of sister chromatid cohesion in mitosis. Probably involved in development of the central nervous system. This is Protein dalmatian (dmt) from Drosophila melanogaster (Fruit fly).